The sequence spans 195 residues: Lipid A acyltransferase PagP (195 aa).

The first 30 residues, 1-30, serve as a signal peptide directing secretion; it reads MRLTLTSRSRLFVLSSLLFISTFDVLSAQA. Residues H67, D110, and S111 contribute to the active site.

This sequence belongs to the lipid A palmitoyltransferase family. In terms of assembly, homodimer.

It localises to the cell outer membrane. It carries out the reaction a lipid A + a 1,2-diacyl-sn-glycero-3-phosphocholine = a hepta-acyl lipid A + a 2-acyl-sn-glycero-3-phosphocholine. It catalyses the reaction a lipid IVA + a 1,2-diacyl-sn-glycero-3-phosphocholine = a lipid IVB + a 2-acyl-sn-glycero-3-phosphocholine. The catalysed reaction is a lipid IIA + a 1,2-diacyl-sn-glycero-3-phosphocholine = a lipid IIB + a 2-acyl-sn-glycero-3-phosphocholine. Its function is as follows. Transfers a fatty acid residue from the sn-1 position of a phospholipid to the N-linked hydroxyfatty acid chain on the proximal unit of lipid A or its precursors. The polypeptide is Lipid A acyltransferase PagP (Dickeya chrysanthemi (strain Ech1591) (Dickeya zeae (strain Ech1591))).